A 370-amino-acid polypeptide reads, in one-letter code: Queuine tRNA-ribosyltransferase (370 aa).

Asp-89 functions as the Proton acceptor in the catalytic mechanism. Substrate-binding positions include 89 to 93 (DSGGF), Asp-143, and Gly-214. The segment at 245–251 (GVGKPED) is RNA binding. Asp-264 serves as the catalytic Nucleophile. The tract at residues 269 to 273 (TRNAR) is RNA binding; important for wobble base 34 recognition. Cys-302, Cys-304, Cys-307, and His-333 together coordinate Zn(2+).

It belongs to the queuine tRNA-ribosyltransferase family. As to quaternary structure, homodimer. Within each dimer, one monomer is responsible for RNA recognition and catalysis, while the other monomer binds to the replacement base PreQ1. It depends on Zn(2+) as a cofactor.

The catalysed reaction is 7-aminomethyl-7-carbaguanine + guanosine(34) in tRNA = 7-aminomethyl-7-carbaguanosine(34) in tRNA + guanine. The protein operates within tRNA modification; tRNA-queuosine biosynthesis. Its function is as follows. Catalyzes the base-exchange of a guanine (G) residue with the queuine precursor 7-aminomethyl-7-deazaguanine (PreQ1) at position 34 (anticodon wobble position) in tRNAs with GU(N) anticodons (tRNA-Asp, -Asn, -His and -Tyr). Catalysis occurs through a double-displacement mechanism. The nucleophile active site attacks the C1' of nucleotide 34 to detach the guanine base from the RNA, forming a covalent enzyme-RNA intermediate. The proton acceptor active site deprotonates the incoming PreQ1, allowing a nucleophilic attack on the C1' of the ribose to form the product. After dissociation, two additional enzymatic reactions on the tRNA convert PreQ1 to queuine (Q), resulting in the hypermodified nucleoside queuosine (7-(((4,5-cis-dihydroxy-2-cyclopenten-1-yl)amino)methyl)-7-deazaguanosine). The sequence is that of Queuine tRNA-ribosyltransferase from Buchnera aphidicola subsp. Acyrthosiphon pisum (strain APS) (Acyrthosiphon pisum symbiotic bacterium).